The primary structure comprises 164 residues: UPF0304 protein YfbU (164 aa).

The protein belongs to the UPF0304 family.

This Shigella flexneri serotype 5b (strain 8401) protein is UPF0304 protein YfbU.